The primary structure comprises 572 residues: Putative acyl-CoA synthetase CCNA_01223 (572 aa).

This sequence belongs to the ATP-dependent AMP-binding enzyme family.

Its pathway is lipid metabolism; sphingolipid metabolism. Its function is as follows. Involved in de novo bacterial ceramide synthesis. The chain is Putative acyl-CoA synthetase CCNA_01223 from Caulobacter vibrioides (strain NA1000 / CB15N) (Caulobacter crescentus).